We begin with the raw amino-acid sequence, 327 residues long: Microtubule-associated protein RP/EB family member 2 (327 aa).

Positions 1–21 are disordered; the sequence is MPGPTQTLSPNGENNNDIIQD. The residue at position 2 (Pro2) is an N-acetylalanine. A Phosphoserine modification is found at Ser9. The Calponin-homology (CH) domain maps to 57 to 159; the sequence is TMSRHDIIAW…FIQWFKKFYD (103 aa). Tyr167 carries the phosphotyrosine modification. 2 disordered regions span residues 171–240 and 299–327; these read EARQ…DKDL and ASEEHEGHTEEPEAEEQAHEQQPPQQEEY. The tract at residues 187–327 is DCTN1-binding; it reads QIFNLPKKSH…EQQPPQQEEY (141 aa). Residues 200–234 show a composition bias toward low complexity; it reads SPTAGAAKSSPAAKPGSTPSRPSSAKRASSSGSAS. 2 positions are modified to phosphoserine: Ser219 and Ser236. One can recognise an EB1 C-terminal domain in the interval 236-306; the sequence is SDKDLETQVI…LYASEEHEGH (71 aa). The segment at 259-302 is APC-binding; it reads EGVEKERDFYFGKLREIELLCQEHGQENDDLVQRLMDILYASEE. Over residues 300-317 the composition is skewed to basic and acidic residues; that stretch reads SEEHEGHTEEPEAEEQAH. Over residues 318–327 the composition is skewed to low complexity; the sequence is EQQPPQQEEY.

This sequence belongs to the MAPRE family. Interacts with DCTN1. Interacts with APC (via C-terminal). Interacts with monomeric and polymerized tubulin. Interacts with SLAIN1. Interacts (via the N-terminal region) with BAG1. Interacts with ASB14. Interacts with HAX1; this interaction is essential for epidermal cell migration. In terms of processing, phosphorylated at Ser-236 by CK2 leading to enhanced cell adhesion. Phosphorylated by CDK1 and AURKB during mitosis reduces the binding affinity of MAPRE2 for microtubules. Ubiquitinated in an ASB14-dependent manner; leading to proteasomal degradation. In terms of tissue distribution, expressed in different tumor cell lines. Up-regulated in activated B- and T-lymphocytes.

It is found in the cytoplasm. Its subcellular location is the cytoskeleton. Its function is as follows. Adapter protein that is involved in microtubule polymerization, and spindle function by stabilizing microtubules and anchoring them at centrosomes. Therefore, ensures mitotic progression and genome stability. Acts as a central regulator of microtubule reorganization in apico-basal epithelial differentiation. Plays a role during oocyte meiosis by regulating microtubule dynamics. Participates in neurite growth by interacting with plexin B3/PLXNB3 and microtubule reorganization during apico-basal epithelial differentiation. Also plays an essential role for cell migration and focal adhesion dynamics. Mechanistically, recruits HAX1 to microtubules in order to regulate focal adhesion dynamics. The protein is Microtubule-associated protein RP/EB family member 2 (MAPRE2) of Homo sapiens (Human).